A 145-amino-acid polypeptide reads, in one-letter code: Protein BUD31 homolog 3 (145 aa).

Belongs to the BUD31 (G10) family.

The protein localises to the nucleus. The sequence is that of Protein BUD31 homolog 3 from Oryza sativa subsp. japonica (Rice).